Here is a 235-residue protein sequence, read N- to C-terminus: Orotidine 5'-phosphate decarboxylase (235 aa).

Residues D10, K32, 59-68, T123, R184, Q193, G213, and R214 contribute to the substrate site; that span reads DLKLHDIPNT. Catalysis depends on K61, which acts as the Proton donor.

It belongs to the OMP decarboxylase family. Type 1 subfamily. As to quaternary structure, homodimer.

It carries out the reaction orotidine 5'-phosphate + H(+) = UMP + CO2. It functions in the pathway pyrimidine metabolism; UMP biosynthesis via de novo pathway; UMP from orotate: step 2/2. In terms of biological role, catalyzes the decarboxylation of orotidine 5'-monophosphate (OMP) to uridine 5'-monophosphate (UMP). This is Orotidine 5'-phosphate decarboxylase from Paramagnetospirillum magneticum (strain ATCC 700264 / AMB-1) (Magnetospirillum magneticum).